We begin with the raw amino-acid sequence, 314 residues long: 4-hydroxy-3-methylbut-2-enyl diphosphate reductase (314 aa).

Position 12 (Cys12) interacts with [4Fe-4S] cluster. 2 residues coordinate (2E)-4-hydroxy-3-methylbut-2-enyl diphosphate: His41 and His74. Dimethylallyl diphosphate contacts are provided by His41 and His74. Isopentenyl diphosphate contacts are provided by His41 and His74. Cys96 serves as a coordination point for [4Fe-4S] cluster. His124 serves as a coordination point for (2E)-4-hydroxy-3-methylbut-2-enyl diphosphate. His124 serves as a coordination point for dimethylallyl diphosphate. Residue His124 coordinates isopentenyl diphosphate. Glu126 functions as the Proton donor in the catalytic mechanism. Thr168 contacts (2E)-4-hydroxy-3-methylbut-2-enyl diphosphate. Cys198 contributes to the [4Fe-4S] cluster binding site. The (2E)-4-hydroxy-3-methylbut-2-enyl diphosphate site is built by Ser226, Ser227, Asn228, and Ser270. Dimethylallyl diphosphate is bound by residues Ser226, Ser227, Asn228, and Ser270. Residues Ser226, Ser227, Asn228, and Ser270 each coordinate isopentenyl diphosphate.

The protein belongs to the IspH family. Requires [4Fe-4S] cluster as cofactor.

It catalyses the reaction isopentenyl diphosphate + 2 oxidized [2Fe-2S]-[ferredoxin] + H2O = (2E)-4-hydroxy-3-methylbut-2-enyl diphosphate + 2 reduced [2Fe-2S]-[ferredoxin] + 2 H(+). The enzyme catalyses dimethylallyl diphosphate + 2 oxidized [2Fe-2S]-[ferredoxin] + H2O = (2E)-4-hydroxy-3-methylbut-2-enyl diphosphate + 2 reduced [2Fe-2S]-[ferredoxin] + 2 H(+). Its pathway is isoprenoid biosynthesis; dimethylallyl diphosphate biosynthesis; dimethylallyl diphosphate from (2E)-4-hydroxy-3-methylbutenyl diphosphate: step 1/1. The protein operates within isoprenoid biosynthesis; isopentenyl diphosphate biosynthesis via DXP pathway; isopentenyl diphosphate from 1-deoxy-D-xylulose 5-phosphate: step 6/6. Functionally, catalyzes the conversion of 1-hydroxy-2-methyl-2-(E)-butenyl 4-diphosphate (HMBPP) into a mixture of isopentenyl diphosphate (IPP) and dimethylallyl diphosphate (DMAPP). Acts in the terminal step of the DOXP/MEP pathway for isoprenoid precursor biosynthesis. The chain is 4-hydroxy-3-methylbut-2-enyl diphosphate reductase from Pseudomonas aeruginosa (strain LESB58).